A 678-amino-acid chain; its full sequence is Electrogenic aspartate/glutamate antiporter SLC25A12, mitochondrial (678 aa).

Ala-2 carries the N-acetylalanine modification. Residues 2–294 are regulatory N-terminal domain; sequence AVKVQTTKRG…TLADIERIAP (293 aa). The Mitochondrial intermembrane portion of the chain corresponds to 2–329; it reads AVKVQTTKRG…WLQIAESAYR (328 aa). Asp-65, Thr-67, Asp-69, Leu-71, and Glu-76 together coordinate Ca(2+). 4 consecutive EF-hand domains span residues 65-76, 86-121, 125-155, and 157-192; these read DQTKDGLISYQE, APDSMFIVAFQLFDKSGNGEVTFENVKEIFGQTIIH, PFNWDCEFIRLHFGHNRKKHLNYTEFTQFLQ, and LQLEHARQAFALKDKSKSGMISGLDFSDIMVTIRSH. Residues 295-310 form a linker loop domain region; it reads LAEGALPYNLAELQRQ. The segment at 320 to 612 is carrier domain; it reads WLQIAESAYR…RWFYIDFGGL (293 aa). Solcar repeat units follow at residues 324 to 416, 424 to 508, and 516 to 604; these read AESA…VRDK, VPLP…CKLL, and VGGL…LQRW. The chain crosses the membrane as a helical span at residues 330 to 347; it reads FTLGSVAGAVGATAVYPI. The Mitochondrial matrix segment spans residues 348–390; sequence DLVKTRMQNQRGSGSVVGELMYKNSFDCFKKVLRYEGFFGLYR. The helical transmembrane segment at 391–410 threads the bilayer; that stretch reads GLIPQLIGVAPEKAIKLTVN. The Mitochondrial intermembrane segment spans residues 411–433; sequence DFVRDKFTRRDGSVPLPAEVLAG. Residues 434–447 form a helical membrane-spanning segment; that stretch reads GCAGGSQVIFTNPL. The Mitochondrial matrix segment spans residues 448 to 482; the sequence is EIVKIRLQVAGEITTGPRVSALNVLRDLGIFGLYK. A helical transmembrane segment spans residues 483 to 502; that stretch reads GAKACFLRDIPFSAIYFPVY. Over 503–521 the chain is Mitochondrial intermembrane; it reads AHCKLLLADENGHVGGLNL. Residues 522-539 form a helical membrane-spanning segment; that stretch reads LAAGAMAGVPAASLVTPA. Topologically, residues 540–578 are mitochondrial matrix; the sequence is DVIKTRLQVAARAGQTTYSGVIDCFRKILREEGPSAFWK. Residues 579–598 form a helical membrane-spanning segment; the sequence is GTAARVFRSSPQFGVTLVTY. Topologically, residues 599–678 are mitochondrial intermembrane; sequence ELLQRWFYID…QPKAAVAATQ (80 aa). Positions 613-675 are C-terminal domain; sequence KPAGSEPTPK…AVVQPKAAVA (63 aa).

The protein belongs to the mitochondrial carrier (TC 2.A.29) family. Homodimer (via N-terminus). Expressed predominantly in the heart and skeletal muscle, weakly in brain and kidney.

Its subcellular location is the mitochondrion inner membrane. It carries out the reaction L-aspartate(in) + L-glutamate(out) + H(+)(out) = L-aspartate(out) + L-glutamate(in) + H(+)(in). It catalyses the reaction 3-sulfino-L-alanine(out) + L-glutamate(in) + H(+)(in) = 3-sulfino-L-alanine(in) + L-glutamate(out) + H(+)(out). The catalysed reaction is 3-sulfino-L-alanine(out) + L-aspartate(in) = 3-sulfino-L-alanine(in) + L-aspartate(out). Activated by calcium-binding in the mitochondrial intermembrane space. Inhibited by pyridoxal 5'-phosphate, bathophenathroline, mercurials, diethyl pyrocarbonate and N-ethylmaleimide. In terms of biological role, mitochondrial electrogenic aspartate/glutamate antiporter that favors efflux of aspartate and entry of glutamate and proton within the mitochondria as part of the malate-aspartate shuttle. Also mediates the uptake of L-cysteinesulfinate (3-sulfino-L-alanine) by mitochondria in exchange of L-glutamate and proton. Can also exchange L-cysteinesulfinate with aspartate in their anionic form without any proton translocation. Lacks transport activity towards L-glutamine or gamma-aminobutyric acid (GABA). The chain is Electrogenic aspartate/glutamate antiporter SLC25A12, mitochondrial from Homo sapiens (Human).